Consider the following 514-residue polypeptide: Xylose import ATP-binding protein XylG (514 aa).

2 consecutive ABC transporter domains span residues 7–246 (FEMR…VGRE) and 263–508 (LEAR…IHAE). ATP is bound at residue 39–46 (GENGAGKS).

The protein belongs to the ABC transporter superfamily. Xylose importer (TC 3.A.1.2.4) family. As to quaternary structure, the complex is composed of two ATP-binding proteins (XylG), two transmembrane proteins (XylH) and a solute-binding protein (XylF).

It localises to the cell inner membrane. It catalyses the reaction D-xylose(out) + ATP + H2O = D-xylose(in) + ADP + phosphate + H(+). In terms of biological role, part of the ABC transporter complex XylFGH involved in xylose import. Responsible for energy coupling to the transport system. The sequence is that of Xylose import ATP-binding protein XylG from Ralstonia nicotianae (strain ATCC BAA-1114 / GMI1000) (Ralstonia solanacearum).